We begin with the raw amino-acid sequence, 108 residues long: Large ribosomal subunit protein uL24 (108 aa).

Belongs to the universal ribosomal protein uL24 family. In terms of assembly, part of the 50S ribosomal subunit.

In terms of biological role, one of two assembly initiator proteins, it binds directly to the 5'-end of the 23S rRNA, where it nucleates assembly of the 50S subunit. Functionally, one of the proteins that surrounds the polypeptide exit tunnel on the outside of the subunit. In Pelobacter propionicus (strain DSM 2379 / NBRC 103807 / OttBd1), this protein is Large ribosomal subunit protein uL24.